Here is a 502-residue protein sequence, read N- to C-terminus: ATP synthase subunit alpha (502 aa).

An ATP-binding site is contributed by 169-176; it reads GDRQTGKT.

This sequence belongs to the ATPase alpha/beta chains family. In terms of assembly, F-type ATPases have 2 components, CF(1) - the catalytic core - and CF(0) - the membrane proton channel. CF(1) has five subunits: alpha(3), beta(3), gamma(1), delta(1), epsilon(1). CF(0) has three main subunits: a(1), b(2) and c(9-12). The alpha and beta chains form an alternating ring which encloses part of the gamma chain. CF(1) is attached to CF(0) by a central stalk formed by the gamma and epsilon chains, while a peripheral stalk is formed by the delta and b chains.

It is found in the cell inner membrane. It carries out the reaction ATP + H2O + 4 H(+)(in) = ADP + phosphate + 5 H(+)(out). Produces ATP from ADP in the presence of a proton gradient across the membrane. The alpha chain is a regulatory subunit. The protein is ATP synthase subunit alpha of Pelobacter propionicus (strain DSM 2379 / NBRC 103807 / OttBd1).